The following is a 479-amino-acid chain: Serralysin C (479 aa).

A propeptide spanning residues methionine 1–serine 17 is cleaved from the precursor. Histidine 188 lines the Zn(2+) pocket. Glutamate 189 is an active-site residue. Zn(2+)-binding residues include histidine 192 and tyrosine 228. Ca(2+) is bound by residues arginine 265, glycine 267, aspartate 297, glycine 299, glycine 300, aspartate 302, threonine 339, glutamate 341, glycine 346, glycine 348, aspartate 350, asparagine 355, alanine 357, asparagine 359, glycine 363, glycine 364, alanine 365, glycine 366, aspartate 368, glycine 372, glycine 373, glycine 375, aspartate 377, glycine 381, glycine 382, alanine 383, glycine 384, aspartate 386, aspartate 395, aspartate 402, and aspartate 412. Hemolysin-type calcium-binding repeat units lie at residues isoleucine 344–leucine 361, glutamine 362–leucine 379, and tyrosine 380–threonine 397.

This sequence belongs to the peptidase M10B family. It depends on Ca(2+) as a cofactor. Zn(2+) serves as cofactor.

It is found in the secreted. The enzyme catalyses Preferential cleavage of bonds with hydrophobic residues in P1'.. The polypeptide is Serralysin C (prtC) (Dickeya chrysanthemi (Pectobacterium chrysanthemi)).